The chain runs to 148 residues: Large ribosomal subunit protein bL9 (148 aa).

This sequence belongs to the bacterial ribosomal protein bL9 family.

Binds to the 23S rRNA. The sequence is that of Large ribosomal subunit protein bL9 from Bacillus cereus (strain ATCC 10987 / NRS 248).